We begin with the raw amino-acid sequence, 442 residues long: Cyclin-A1-2 (442 aa).

Composition is skewed to polar residues over residues 1–12 (MSSSSRNLSQEN) and 39–63 (ITNQ…NKIG). The interval 1–72 (MSSSSRNLSQ…GQSKKAPKPA (72 aa)) is disordered.

Belongs to the cyclin family. Cyclin AB subfamily. Interacts with CDC20-1, CDC20-2, FZR2/CCS52A1 and FZR1/CCS52A2. As to expression, expressed in roots, stems and flowers.

It localises to the cytoplasm. The protein resides in the nucleus. Functionally, involved in the regulation of male meiosis progression. The chain is Cyclin-A1-2 (CYCA1-2) from Arabidopsis thaliana (Mouse-ear cress).